The primary structure comprises 977 residues: uncharacterized protein (977 aa).

An N-terminal signal peptide occupies residues 1–24 (MQSNLLKVLGVLAIVATLVCFIFA). Residues 125 to 146 (TESTRPGKSNLDDKGNMIPIPR) form a disordered region. 6 consecutive transmembrane segments (helical) span residues 612–632 (IKAI…LGFA), 722–742 (LGLS…IVII), 754–774 (AFMA…FLLF), 796–816 (VVMM…LDFV), 833–853 (FIGT…INWF), and 866–886 (GVNM…YGYV). Residues 918-977 (KALSPIGMDDKTRQGITGRAEARLKQRNKTLDQAEKNRKNTPKEGGEKTNAEPPQPEARG) are disordered. The span at 937–967 (AEARLKQRNKTLDQAEKNRKNTPKEGGEKTN) shows a compositional bias: basic and acidic residues.

It belongs to the TrbL/VirB6 family.

The protein resides in the cell membrane. This is an uncharacterized protein from Rickettsia felis (strain ATCC VR-1525 / URRWXCal2) (Rickettsia azadi).